The chain runs to 213 residues: Imidazole glycerol phosphate synthase subunit HisH (213 aa).

A Glutamine amidotransferase type-1 domain is found at 4-213 (SIAIVDYGMG…LYRNFVHWKP (210 aa)). The active-site Nucleophile is Cys83. Catalysis depends on residues His193 and Glu195.

Heterodimer of HisH and HisF.

It is found in the cytoplasm. The enzyme catalyses 5-[(5-phospho-1-deoxy-D-ribulos-1-ylimino)methylamino]-1-(5-phospho-beta-D-ribosyl)imidazole-4-carboxamide + L-glutamine = D-erythro-1-(imidazol-4-yl)glycerol 3-phosphate + 5-amino-1-(5-phospho-beta-D-ribosyl)imidazole-4-carboxamide + L-glutamate + H(+). It catalyses the reaction L-glutamine + H2O = L-glutamate + NH4(+). It participates in amino-acid biosynthesis; L-histidine biosynthesis; L-histidine from 5-phospho-alpha-D-ribose 1-diphosphate: step 5/9. In terms of biological role, IGPS catalyzes the conversion of PRFAR and glutamine to IGP, AICAR and glutamate. The HisH subunit catalyzes the hydrolysis of glutamine to glutamate and ammonia as part of the synthesis of IGP and AICAR. The resulting ammonia molecule is channeled to the active site of HisF. This Burkholderia lata (strain ATCC 17760 / DSM 23089 / LMG 22485 / NCIMB 9086 / R18194 / 383) protein is Imidazole glycerol phosphate synthase subunit HisH.